Reading from the N-terminus, the 253-residue chain is DNA repair protein RecO (253 aa).

Belongs to the RecO family.

Its function is as follows. Involved in DNA repair and RecF pathway recombination. This Dehalococcoides mccartyi (strain ATCC BAA-2266 / KCTC 15142 / 195) (Dehalococcoides ethenogenes (strain 195)) protein is DNA repair protein RecO.